The sequence spans 279 residues: Tryptophan synthase alpha chain (279 aa).

Catalysis depends on proton acceptor residues Glu-50 and Asp-61.

Belongs to the TrpA family. In terms of assembly, tetramer of two alpha and two beta chains.

The enzyme catalyses (1S,2R)-1-C-(indol-3-yl)glycerol 3-phosphate + L-serine = D-glyceraldehyde 3-phosphate + L-tryptophan + H2O. It participates in amino-acid biosynthesis; L-tryptophan biosynthesis; L-tryptophan from chorismate: step 5/5. In terms of biological role, the alpha subunit is responsible for the aldol cleavage of indoleglycerol phosphate to indole and glyceraldehyde 3-phosphate. In Rhizobium etli (strain ATCC 51251 / DSM 11541 / JCM 21823 / NBRC 15573 / CFN 42), this protein is Tryptophan synthase alpha chain.